The primary structure comprises 209 residues: Urease accessory protein UreG (209 aa).

G10–T17 provides a ligand contact to GTP.

The protein belongs to the SIMIBI class G3E GTPase family. UreG subfamily. In terms of assembly, homodimer. UreD, UreF and UreG form a complex that acts as a GTP-hydrolysis-dependent molecular chaperone, activating the urease apoprotein by helping to assemble the nickel containing metallocenter of UreC. The UreE protein probably delivers the nickel.

It is found in the cytoplasm. Its function is as follows. Facilitates the functional incorporation of the urease nickel metallocenter. This process requires GTP hydrolysis, probably effectuated by UreG. In Lysinibacillus sphaericus (strain C3-41), this protein is Urease accessory protein UreG.